The sequence spans 416 residues: Splicing factor U2AF 50 kDa subunit (416 aa).

Residues 1–10 (MGYDDRERDR) show a composition bias toward basic and acidic residues. Positions 1 to 47 (MGYDDRERDRERRRHRSRSRDRHRERSRDRRHHRNSRRKPSLYWDVP) are disordered. Composition is skewed to basic residues over residues 11–21 (ERRRHRSRSRD) and 29–40 (DRRHHRNSRRKP). 3 RRM domains span residues 93-175 (RRLY…RPHD), 207-285 (HKIF…RASV), and 318-408 (EVLC…YFDP).

Belongs to the splicing factor SR family. Forms a heterodimer with the U2AF small subunit.

It is found in the nucleus. In terms of biological role, necessary for the splicing of pre-mRNA. Binds to the polypyrimidine tract of introns early during spliceosome assembly. This Drosophila melanogaster (Fruit fly) protein is Splicing factor U2AF 50 kDa subunit (U2af50).